The sequence spans 254 residues: Pyridoxine 5'-phosphate synthase (254 aa).

N12 contacts 3-amino-2-oxopropyl phosphate. 14-15 (DH) is a binding site for 1-deoxy-D-xylulose 5-phosphate. 3-amino-2-oxopropyl phosphate is bound at residue R23. H48 serves as the catalytic Proton acceptor. 1-deoxy-D-xylulose 5-phosphate is bound by residues R50 and H55. E75 (proton acceptor) is an active-site residue. T105 is a binding site for 1-deoxy-D-xylulose 5-phosphate. The active-site Proton donor is the H199. Residues G200 and 221–222 (GF) contribute to the 3-amino-2-oxopropyl phosphate site.

This sequence belongs to the PNP synthase family. In terms of assembly, homooctamer; tetramer of dimers.

It localises to the cytoplasm. The catalysed reaction is 3-amino-2-oxopropyl phosphate + 1-deoxy-D-xylulose 5-phosphate = pyridoxine 5'-phosphate + phosphate + 2 H2O + H(+). The protein operates within cofactor biosynthesis; pyridoxine 5'-phosphate biosynthesis; pyridoxine 5'-phosphate from D-erythrose 4-phosphate: step 5/5. Functionally, catalyzes the complicated ring closure reaction between the two acyclic compounds 1-deoxy-D-xylulose-5-phosphate (DXP) and 3-amino-2-oxopropyl phosphate (1-amino-acetone-3-phosphate or AAP) to form pyridoxine 5'-phosphate (PNP) and inorganic phosphate. The protein is Pyridoxine 5'-phosphate synthase of Rhodopseudomonas palustris (strain ATCC BAA-98 / CGA009).